A 919-amino-acid chain; its full sequence is GPI ethanolamine phosphate transferase 1 (919 aa).

Residues 1-9 (MWNKTRTTL) are Cytoplasmic-facing. A helical membrane pass occupies residues 10-30 (LAVGVLFHLFYLWSIFDIYFI). At 31–457 (SPLVHGMSPY…TTYNWRFIRT (427 aa)) the chain is on the lumenal side. N-linked (GlcNAc...) asparagine glycans are attached at residues Asn90, Asn138, Asn198, Asn202, Asn286, and Asn312. A helical membrane pass occupies residues 458–478 (IVTFGFVGWIFFSFIIFLKSF). Topologically, residues 479 to 488 (ILENVIDDQK) are cytoplasmic. The chain crosses the membrane as a helical span at residues 489–509 (ASPLSHAVFGSIGILLNWILF). Topologically, residues 510–512 (YQH) are lumenal. A helical membrane pass occupies residues 513–533 (SPFNFYMYLLFPLYFWSYIFT). Residues 534–553 (NRSVLRSGIKEFFKGTSPWK) are Cytoplasmic-facing. A helical membrane pass occupies residues 554–574 (RVLITISIISVYEGIVYGFFH). The Lumenal segment spans residues 575–576 (RW). A helical transmembrane segment spans residues 577–597 (TFTLITNILAFYPFICGVREL). Residue Ser598 is a topological domain, cytoplasmic. A helical membrane pass occupies residues 599–619 (VNILWIITSVLLSTFTLFDAV). Residues 620 to 626 (KIEDLNQ) are Lumenal-facing. The chain crosses the membrane as a helical span at residues 627–647 (IHLAGLLIILSAFYALYKIHS). Topologically, residues 648-655 (RINSYTRA) are cytoplasmic. Residues 656–676 (IFAIQISLVAAMLAVTHRSVI) traverse the membrane as a helical segment. Residues 677–687 (SLQLRQGLPRE) lie on the Lumenal side of the membrane. The helical transmembrane segment at 688-708 (SQVAGWIIFFVSLFVMPILHY) threads the bilayer. Residues 709–720 (RKPNNDYKVRLL) are Cytoplasmic-facing. A helical transmembrane segment spans residues 721–741 (IIYLTFAPSFIILTISFESLF). Topologically, residues 742 to 776 (YFLFTSYMVQWIEIENKIKEMKTQKDENWLQVLRV) are lumenal. Residues 777–797 (SVIGFFLLQVAFFGTGNVASI) traverse the membrane as a helical segment. At 798 to 807 (SSFSLESVCR) the chain is on the cytoplasmic side. The chain crosses the membrane as a helical span at residues 808 to 828 (LLPIFDPFLMGALLMLKLIIP). Over 829–848 (YGLLSTCLGILNLKLNFKDY) the chain is Lumenal. Residues 849–869 (TISSLIISMSDILSLNFFYLL) form a helical membrane-spanning segment. The Cytoplasmic segment spans residues 870 to 885 (RTEGSWLDIGITISNY). A helical membrane pass occupies residues 886 to 906 (CLAILSSLFMLILEVLGHVLL). The Lumenal portion of the chain corresponds to 907 to 919 (KNVIIQDKTKKTQ).

This sequence belongs to the PIGG/PIGN/PIGO family. PIGN subfamily. In terms of assembly, interacts with CSF1; CSF1 channels phosphatidylethanolamine to MCD4 in the endoplasmic reticulum at contact sites to support GPI anchor biosynthesis. N-glycosylated.

The protein localises to the endoplasmic reticulum membrane. The protein resides in the golgi apparatus membrane. It localises to the vacuole membrane. Its pathway is glycolipid biosynthesis; glycosylphosphatidylinositol-anchor biosynthesis. Functionally, ethanolamine phosphate transferase involved in glycosylphosphatidylinositol-anchor biosynthesis. Transfers ethanolamine phosphate to the first alpha-1,4-linked mannose of the glycosylphosphatidylinositol precursor of GPI-anchor. Ethanolamine phosphate on the alpha-1,4-linked mannose is essential for further mannosylation by GPI10 and is necessary for an efficient recognition of GPI lipids and GPI proteins by the GPI transamidase, for the efficient transport of GPI anchored proteins from endoplasmic reticulum to Golgi and for the physiological incorporation of ceramides into GPI anchors by lipid remodeling. Also involved in non-mitochondrial ATP movements across membrane and participates in Golgi and endoplasmic reticulum function, Also required for the incorporation of BGL2 into the cell wall. The protein is GPI ethanolamine phosphate transferase 1 (MCD4) of Saccharomyces cerevisiae (strain ATCC 204508 / S288c) (Baker's yeast).